A 358-amino-acid chain; its full sequence is Histidinol-phosphate aminotransferase (358 aa).

N6-(pyridoxal phosphate)lysine is present on Lys-218.

Belongs to the class-II pyridoxal-phosphate-dependent aminotransferase family. Histidinol-phosphate aminotransferase subfamily. In terms of assembly, homodimer. Pyridoxal 5'-phosphate is required as a cofactor.

The enzyme catalyses L-histidinol phosphate + 2-oxoglutarate = 3-(imidazol-4-yl)-2-oxopropyl phosphate + L-glutamate. It participates in amino-acid biosynthesis; L-histidine biosynthesis; L-histidine from 5-phospho-alpha-D-ribose 1-diphosphate: step 7/9. The sequence is that of Histidinol-phosphate aminotransferase from Dehalococcoides mccartyi (strain ATCC BAA-2100 / JCM 16839 / KCTC 5957 / BAV1).